The primary structure comprises 333 residues: uncharacterized protein (333 aa).

The first 16 residues, 1-16 (MRPFLMILSVTYIASA), serve as a signal peptide directing secretion. The N-linked (GlcNAc...) asparagine glycan is linked to Asn-204.

This is an uncharacterized protein from Encephalitozoon cuniculi (strain GB-M1) (Microsporidian parasite).